The chain runs to 123 residues: MQWLAIGLGAAIGACLRGWLARFNPMHHWIPLGTLGANVLGGLLIGLALVWFERVGSGLSPNIRLFVITGFLGGLTTFSTFSVEVFTFIHNGKLLAGLGLIGLHVGLTLLATALGFYFFKLVL.

4 consecutive transmembrane segments (helical) span residues 1–21 (MQWLAIGLGAAIGACLRGWLA), 32–52 (LGTLGANVLGGLLIGLALVWF), 66–86 (FVITGFLGGLTTFSTFSVEVF), and 99–119 (GLIGLHVGLTLLATALGFYFF). Na(+) is bound by residues Gly-73 and Thr-76.

It belongs to the fluoride channel Fluc/FEX (TC 1.A.43) family.

It localises to the cell inner membrane. It catalyses the reaction fluoride(in) = fluoride(out). Na(+) is not transported, but it plays an essential structural role and its presence is essential for fluoride channel function. In terms of biological role, fluoride-specific ion channel. Important for reducing fluoride concentration in the cell, thus reducing its toxicity. In Psychrobacter cryohalolentis (strain ATCC BAA-1226 / DSM 17306 / VKM B-2378 / K5), this protein is Fluoride-specific ion channel FluC.